The following is a 611-amino-acid chain: UvrABC system protein C (611 aa).

One can recognise a GIY-YIG domain in the interval 14-91 (TSPGCYIHKD…IKENQPKYNI (78 aa)). The UVR domain occupies 196–231 (DQIIEDLRGKMAGAAQAMEFEKAAEYRDLIQSIGTL). The tract at residues 587–611 (KLNPKTQEQEQAQLREVAEPQIGLE) is disordered.

The protein belongs to the UvrC family. Interacts with UvrB in an incision complex.

It localises to the cytoplasm. Functionally, the UvrABC repair system catalyzes the recognition and processing of DNA lesions. UvrC both incises the 5' and 3' sides of the lesion. The N-terminal half is responsible for the 3' incision and the C-terminal half is responsible for the 5' incision. In Streptococcus sanguinis (strain SK36), this protein is UvrABC system protein C.